The following is a 377-amino-acid chain: Alanine racemase (377 aa).

K37 functions as the Proton acceptor; specific for D-alanine in the catalytic mechanism. K37 is subject to N6-(pyridoxal phosphate)lysine. Residue R135 participates in substrate binding. The Proton acceptor; specific for L-alanine role is filled by Y271. Substrate is bound at residue M319.

It belongs to the alanine racemase family. Pyridoxal 5'-phosphate is required as a cofactor.

The catalysed reaction is L-alanine = D-alanine. Its pathway is amino-acid biosynthesis; D-alanine biosynthesis; D-alanine from L-alanine: step 1/1. Its function is as follows. Catalyzes the interconversion of L-alanine and D-alanine. May also act on other amino acids. This is Alanine racemase (alr) from Helicobacter pylori (strain J99 / ATCC 700824) (Campylobacter pylori J99).